The primary structure comprises 418 residues: Protein YdhQ (418 aa).

This is Protein YdhQ (ydhQ) from Escherichia coli (strain K12).